A 244-amino-acid chain; its full sequence is Inner kinetochore subunit fta7 (244 aa).

The protein belongs to the CENP-Q/OKP1 family. Component of the heterotetrameric kinetochore subcomplex COMA, which consists of fta2, fta7, mal2 and mis17. The COMA subcomplex is part of a larger constitutive centromere-associated network (CCAN) (also known as central kinetochore Sim4 complex in fission yeast), which is composed of at least cnl2, cnp3, cnp20, fta1, fta2, fta3, fta4, fta6, fta7, mal2, mhf1, mhf2, mis6, mis15, mis17, sim4 and wip1.

The protein localises to the nucleus. The protein resides in the chromosome. Its subcellular location is the centromere. It localises to the kinetochore. It is found in the cytoplasm. The protein localises to the cytoskeleton. The protein resides in the microtubule organizing center. Its subcellular location is the spindle pole body. Functionally, component of the kinetochore, a multiprotein complex that assembles on centromeric DNA and attaches chromosomes to spindle microtubules, mediating chromosome segregation and sister chromatid segregation during meiosis and mitosis. Component of the inner kinetochore COMA complex, which connects centromere-associated proteins and the outer kinetochore. COMA interacts with other inner kinetochore proteins to form the inner kinetochore constitutive centromere-associated network (CCAN), which serves as a structural platform for outer kinetochore assembly. This chain is Inner kinetochore subunit fta7 (fta7), found in Schizosaccharomyces pombe (strain 972 / ATCC 24843) (Fission yeast).